The chain runs to 472 residues: UDP-N-acetylmuramate--L-alanine ligase (472 aa).

118–124 (GTHGKTT) provides a ligand contact to ATP.

Belongs to the MurCDEF family.

It localises to the cytoplasm. The catalysed reaction is UDP-N-acetyl-alpha-D-muramate + L-alanine + ATP = UDP-N-acetyl-alpha-D-muramoyl-L-alanine + ADP + phosphate + H(+). The protein operates within cell wall biogenesis; peptidoglycan biosynthesis. In terms of biological role, cell wall formation. This Methylococcus capsulatus (strain ATCC 33009 / NCIMB 11132 / Bath) protein is UDP-N-acetylmuramate--L-alanine ligase.